A 477-amino-acid chain; its full sequence is Stromelysin-1 (477 aa).

Positions 1-17 (MKGLPVLLWLCVVVCSS) are cleaved as a signal peptide. A propeptide spans 18-99 (YPLHDSARDD…PRCGVPDVGG (82 aa)) (activation peptide). The short motif at 90–97 (PRCGVPDV) is the Cysteine switch element. C92 is a Zn(2+) binding site. 2 residues coordinate Ca(2+): D124 and D158. Residues H168 and D170 each contribute to the Zn(2+) site. Ca(2+) contacts are provided by D175, G176, G178, and V180. Residue H183 participates in Zn(2+) binding. Ca(2+) contacts are provided by G190, N192, and D194. H196 provides a ligand contact to Zn(2+). Residues D198, D199, and E201 each contribute to the Ca(2+) site. H218 is a Zn(2+) binding site. The active site involves E219. Zn(2+) is bound by residues H222 and H228. Hemopexin repeat units lie at residues 287 to 336 (SPMC…WPSL), 337 to 383 (PSNM…GLPA), 385 to 433 (VKKI…FPGV), and 434 to 477 (DSRV…WFNC). Cysteines 290 and 477 form a disulfide. D297 provides a ligand contact to Ca(2+). Positions 389 and 438 each coordinate Ca(2+).

It belongs to the peptidase M10A family. Ca(2+) is required as a cofactor. Requires Zn(2+) as cofactor.

The protein localises to the secreted. It is found in the extracellular space. The protein resides in the extracellular matrix. It catalyses the reaction Preferential cleavage where P1', P2' and P3' are hydrophobic residues.. Functionally, metalloproteinase with a rather broad substrate specificity that can degrade fibronectin, laminin, gelatins of type I, III, IV, and V; collagens III, IV, X, and IX, and cartilage proteoglycans. Activates different molecules including growth factors, plasminogen or other matrix metalloproteinases such as MMP9. Once released into the extracellular matrix (ECM), the inactive pro-enzyme is activated by the plasmin cascade signaling pathway. Also acts intracellularly. For example, in dopaminergic neurons, gets activated by the serine protease HTRA2 upon stress and plays a pivotal role in DA neuronal degeneration by mediating microglial activation and alpha-synuclein/SNCA cleavage. In addition, plays a role in immune response and possesses antiviral activity against various viruses. Mechanistically, translocates from the cytoplasm into the cell nucleus upon virus infection to influence NF-kappa-B activities. This chain is Stromelysin-1 (Mmp3), found in Mus musculus (Mouse).